The following is an 804-amino-acid chain: Chondroitin sulfate synthase mig-22 (804 aa).

Residues 1–6 (MVGGGR) lie on the Cytoplasmic side of the membrane. A helical; Signal-anchor for type II membrane protein transmembrane segment spans residues 7–27 (TGIHLLLGFLIGAALALFFFS). Topologically, residues 28-804 (STPSIDLTSS…QLAKLLFHEK (777 aa)) are lumenal. Residues Asn-123, Asn-172, and Asn-268 are each glycosylated (N-linked (GlcNAc...) asparagine).

Belongs to the chondroitin N-acetylgalactosaminyltransferase family. As to quaternary structure, interacts with sqv-5. A divalent metal cation serves as cofactor. Expressed in seam cells, the vulval epithelium and in oocytes (at protein level).

The protein localises to the golgi apparatus. The protein resides in the golgi stack membrane. It carries out the reaction 3-O-(beta-D-GlcA-(1-&gt;3)-beta-D-GalNAc-(1-&gt;4)-beta-D-GlcA-(1-&gt;3)-beta-D-Gal-(1-&gt;3)-beta-D-Gal-(1-&gt;4)-beta-D-Xyl)-L-seryl-[protein] + UDP-N-acetyl-alpha-D-galactosamine = 3-O-(beta-D-GalNAc-(1-&gt;4)-beta-D-GlcA-(1-&gt;3)-beta-D-GalNAc-(1-&gt;4)-beta-D-GlcA-(1-&gt;3)-beta-D-Gal-(1-&gt;3)-beta-D-Gal-(1-&gt;4)-beta-D-Xyl)-L-seryl-[protein] + UDP + H(+). The catalysed reaction is 3-O-{beta-D-GlcA-(1-&gt;3)-[beta-D-GalNAc-(1-&gt;4)-beta-D-GlcA-(1-&gt;3)](n)-beta-D-GalNAc-(1-&gt;4)-beta-D-GlcA-(1-&gt;3)-beta-D-Gal-(1-&gt;3)-beta-D-Gal-(1-&gt;4)-beta-D-Xyl}-L-seryl-[protein] + UDP-N-acetyl-alpha-D-galactosamine = 3-O-{[beta-D-GalNAc-(1-&gt;4)-beta-D-GlcA-(1-&gt;3)](n+1)-beta-D-GalNAc-(1-&gt;4)-beta-D-GlcA-(1-&gt;3)-beta-D-Gal-(1-&gt;3)-beta-D-Gal-(1-&gt;4)-beta-D-Xyl}-L-seryl-[protein] + UDP + H(+). The enzyme catalyses 3-O-(beta-D-GalNAc-(1-&gt;4)-beta-D-GlcA-(1-&gt;3)-beta-D-Gal-(1-&gt;3)-beta-D-Gal-(1-&gt;4)-beta-D-Xyl)-L-seryl-[protein] + UDP-alpha-D-glucuronate = 3-O-(beta-D-GlcA-(1-&gt;3)-beta-D-GalNAc-(1-&gt;4)-beta-D-GlcA-(1-&gt;3)-beta-D-Gal-(1-&gt;3)-beta-D-Gal-(1-&gt;4)-beta-D-Xyl)-L-seryl-[protein] + UDP + H(+). It catalyses the reaction 3-O-{[beta-D-GalNAc-(1-&gt;4)-beta-D-GlcA-(1-&gt;3)](n)-beta-D-GalNAc-(1-&gt;4)-beta-D-GlcA-(1-&gt;3)-beta-D-Gal-(1-&gt;3)-beta-D-Gal-(1-&gt;4)-beta-D-Xyl}-L-seryl-[protein] + UDP-alpha-D-glucuronate = 3-O-{beta-D-GlcA-(1-&gt;3)-[beta-D-GalNAc-(1-&gt;4)-beta-D-GlcA-(1-&gt;3)](n)-beta-D-GalNAc-(1-&gt;4)-beta-D-GlcA-(1-&gt;3)-beta-D-Gal-(1-&gt;3)-beta-D-Gal-(1-&gt;4)-beta-D-Xyl}-L-seryl-[protein] + UDP + H(+). Functionally, has both beta-1,3-glucuronic acid and beta-1,4-N-acetylgalactosamine transferase activity. Transfers glucuronic acid (GlcUA) from UDP-GlcUA and N-acetylgalactosamine (GalNAc) from UDP-GalNAc to the non-reducing end of the elongating chondroitin polymer. Required together with sqv-5 for the biosynthesis of chondroitin. Chondroitin is involved in organogenesis of the vulva, maturation of the gonad, and neural development. May have a specific role in unc-6/netrin-mediated dorsal guidance of gonadal distal tip cells. Glycosyltransferase activity is weak. The protein is Chondroitin sulfate synthase mig-22 (mig-22) of Caenorhabditis elegans.